The sequence spans 609 residues: Proline--tRNA ligase (609 aa).

The protein belongs to the class-II aminoacyl-tRNA synthetase family. ProS type 1 subfamily. Homodimer.

The protein localises to the cytoplasm. The catalysed reaction is tRNA(Pro) + L-proline + ATP = L-prolyl-tRNA(Pro) + AMP + diphosphate. Its function is as follows. Catalyzes the attachment of proline to tRNA(Pro) in a two-step reaction: proline is first activated by ATP to form Pro-AMP and then transferred to the acceptor end of tRNA(Pro). As ProRS can inadvertently accommodate and process non-cognate amino acids such as alanine and cysteine, to avoid such errors it has two additional distinct editing activities against alanine. One activity is designated as 'pretransfer' editing and involves the tRNA(Pro)-independent hydrolysis of activated Ala-AMP. The other activity is designated 'posttransfer' editing and involves deacylation of mischarged Ala-tRNA(Pro). The misacylated Cys-tRNA(Pro) is not edited by ProRS. This Synechococcus sp. (strain JA-3-3Ab) (Cyanobacteria bacterium Yellowstone A-Prime) protein is Proline--tRNA ligase.